Reading from the N-terminus, the 525-residue chain is Sterol O-acyltransferase 2 (525 aa).

2 disordered regions span residues 1-34 (MQPK…THGT) and 77-97 (QDRP…ELHP). Residues 1-119 (MQPKVPQLRR…IDELMEVQHF (119 aa)) lie on the Cytoplasmic side of the membrane. The segment covering 9–23 (RRREGLGEEQEKGAR) has biased composition (basic and acidic residues). Position 118 (His118) interacts with cholesterol. The helical transmembrane segment at 120–141 (RTIYHMFIAGLCVLIISTLAID) threads the bilayer. The Lumenal portion of the chain corresponds to 142 to 161 (FIDEGRLMLEFDLLLFSFGQ). The chain crosses the membrane as a helical span at residues 162-187 (LPLALMTWVPMFLSTLLVPYQTLWLW). Residues 188 to 199 (ARPRAGGAWMLG) lie on the Cytoplasmic side of the membrane. Residues 200–223 (ASLGCVLLAAHAVVLCVLPVHVSV) form a helical membrane-spanning segment. Topologically, residues 224–231 (RHELPPAS) are lumenal. A helical membrane pass occupies residues 232–255 (RCVLVFEQVRLLMKSYSFLRETVP). The Cytoplasmic portion of the chain corresponds to 256–296 (GIFCVRGGKGISPPSFSSYLYFLFCPTLIYRETYPRTPSIR). Cysteine sulfenic acid (-SOH); alternate is present on Cys280. Cys280 participates in a covalent cross-link: Glycyl cysteine thioester (Cys-Gly) (interchain with G-Cter in ubiquitin); alternate. Residues 297 to 329 (WNYVAKNFAQVLGCLLYACFILGRLCVPVFANM) traverse the membrane as a helical segment. The Lumenal segment spans residues 330–346 (SREPFSTRALLLSILHA). The helical transmembrane segment at 347–372 (TGPGIFMLLLIFFAFLHCWLNAFAEM) threads the bilayer. At 373-420 (LRFGDRMFYRDWWNSTSFSNYYRTWNVVVHDWLYSYVYQDGLWLLGRR) the chain is on the cytoplasmic side. Positions 380–386 (FYRDWWN) match the FYXDWWN motif motif. Positions 392, 395, 398, 402, 410, and 433 each coordinate an acyl-CoA. Residues 421-445 (ARGVAMLGVFLVSAVVHEYIFCFVL) form a helical membrane-spanning segment. Residue His437 is part of the active site. Over 446 to 451 (GFFYPV) the chain is Lumenal. A helical membrane pass occupies residues 452–467 (MLMLFLVFGGLLNFTM). Residues 468 to 473 (NDRHTG) are Cytoplasmic-facing. Residues 474–505 (PAWNILMWTFLFMGQGIQVSLYCQEWYARRHC) traverse the membrane as a helical segment. Over 506–525 (PLPQTTFWGMVTPRSWSCHP) the chain is Lumenal.

This sequence belongs to the membrane-bound acyltransferase family. Sterol o-acyltransferase subfamily. As to quaternary structure, may form homo- or heterodimers. Interacts with INSIG1; the interaction is direct and promotes association with AMFR/gp78. Polyubiquitinated by AMFR/gp78 at Cys-280, leading to its degradation when the lipid levels are low. Association with AMFR/gp78 is mediated via interaction with INSIG1. High concentration of cholesterol and fatty acid results in Cys-280 oxidation, preventing ubiquitination at the same site, resulting in protein stabilization. Post-translationally, oxidized at Cys-280: high concentration of cholesterol and fatty acid induce reactive oxygen species, which oxidizes Cys-280, preventing ubiquitination at the same site, and resulting in protein stabilization.

The protein resides in the endoplasmic reticulum membrane. The enzyme catalyses a sterol + a long-chain fatty acyl-CoA = a long-chain 3-hydroxysterol ester + CoA. It carries out the reaction cholesterol + an acyl-CoA = a cholesterol ester + CoA. The catalysed reaction is cholesterol + (9Z)-octadecenoyl-CoA = cholesteryl (9Z-octadecenoate) + CoA. It catalyses the reaction (5Z,8Z,11Z,14Z,17Z)-eicosapentaenoyl-CoA + cholesterol = (5Z,8Z,11Z,14Z,17Z-eicosapentaenoyl)-cholesterol + CoA. The enzyme catalyses (9Z,12Z,15Z)-octadecatrienoyl-CoA + cholesterol = (9Z,12Z,15Z-octadecatrienoyl)-cholesterol + CoA. It carries out the reaction (5Z,8Z,11Z,14Z)-eicosatetraenoyl-CoA + cholesterol = cholesteryl (5Z,8Z,11Z,14Z)-eicosatetraenoate + CoA. Catalyzes the formation of fatty acid-cholesterol esters, which are less soluble in membranes than cholesterol. Plays a role in lipoprotein assembly and dietary cholesterol absorption. Utilizes oleoyl-CoA ((9Z)-octadecenoyl-CoA) and linolenoyl-CoA ((9Z,12Z,15Z)-octadecatrienoyl-CoA) as substrates. May provide cholesteryl esters for lipoprotein secretion from hepatocytes and intestinal mucosa. The protein is Sterol O-acyltransferase 2 of Mus musculus (Mouse).